Consider the following 1126-residue polypeptide: Translation initiation factor IF-2 (1126 aa).

A disordered region spans residues 63–519 (LSINKPSIKK…TTRQRQKRRA (457 aa)). A compositionally biased stretch (basic and acidic residues) spans 70–83 (IKKDNFKQNKEDKS). Positions 93 to 111 (PLKNNSNKKPLLIKPLNKP) are enriched in low complexity. The span at 116–151 (KISNQLQNPNKPNIVNSSQSRANLTNTNSKPSQNFN) shows a compositional bias: polar residues. The span at 161–171 (TPPPIKSPAKP) shows a compositional bias: pro residues. Positions 181 to 195 (NINNNVKSSESSQNI) are enriched in polar residues. 2 stretches are compositionally biased toward low complexity: residues 211-224 (NTNK…NNRK) and 240-252 (IINP…NKQN). Over residues 254–264 (AFKQTASNRPG) the composition is skewed to polar residues. Composition is skewed to low complexity over residues 291 to 315 (NRQG…GLRN) and 327 to 349 (NRQG…NRPG). Over residues 429–443 (GKTDWDDSAKLEALR) the composition is skewed to basic and acidic residues. Residues 501-517 (KQFKKKKKETTRQRQKR) are compositionally biased toward basic residues. Residues 618 to 790 (RRPPVITVMG…ILLVSDVEDL (173 aa)) enclose the tr-type G domain. Positions 627–634 (GHVDHGKT) are G1. Residue 627–634 (GHVDHGKT) participates in GTP binding. A G2 region spans residues 652 to 656 (GITQH). Positions 677–680 (DTPG) are G3. GTP-binding positions include 677–681 (DTPGH) and 731–734 (NKID). Residues 731–734 (NKID) form a G4 region. The interval 767-769 (SAI) is G5.

It belongs to the TRAFAC class translation factor GTPase superfamily. Classic translation factor GTPase family. IF-2 subfamily.

It is found in the cytoplasm. Functionally, one of the essential components for the initiation of protein synthesis. Protects formylmethionyl-tRNA from spontaneous hydrolysis and promotes its binding to the 30S ribosomal subunits. Also involved in the hydrolysis of GTP during the formation of the 70S ribosomal complex. This Prochlorococcus marinus (strain AS9601) protein is Translation initiation factor IF-2.